A 156-amino-acid polypeptide reads, in one-letter code: Cytochrome c-type biogenesis protein CcmE 1 (156 aa).

At 1-8 (MNATRKQR) the chain is on the cytoplasmic side. Residues 9-29 (LWLVIGVLTAAALAVTLIALA) form a helical; Signal-anchor for type II membrane protein membrane-spanning segment. The Periplasmic segment spans residues 30 to 156 (LQRNMSYLFT…AAAAPLSGVR (127 aa)). 2 residues coordinate heme: H123 and Y127.

The protein belongs to the CcmE/CycJ family.

It is found in the cell inner membrane. Its function is as follows. Heme chaperone required for the biogenesis of c-type cytochromes. Transiently binds heme delivered by CcmC and transfers the heme to apo-cytochromes in a process facilitated by CcmF and CcmH. This Xanthomonas campestris pv. campestris (strain 8004) protein is Cytochrome c-type biogenesis protein CcmE 1.